The primary structure comprises 221 residues: Uracil-DNA glycosylase 1 (221 aa).

D61 acts as the Proton acceptor in catalysis.

The protein belongs to the uracil-DNA glycosylase (UDG) superfamily. UNG family.

It is found in the cytoplasm. It carries out the reaction Hydrolyzes single-stranded DNA or mismatched double-stranded DNA and polynucleotides, releasing free uracil.. In terms of biological role, excises uracil residues from the DNA which can arise as a result of misincorporation of dUMP residues by DNA polymerase or due to deamination of cytosine. This is Uracil-DNA glycosylase 1 from Listeria monocytogenes serotype 4b (strain F2365).